The primary structure comprises 312 residues: NAD-dependent protein deacylase Sirt4 (312 aa).

Residues 1–16 (MRVGQLLRFRSTSLRS) constitute a mitochondrion transit peptide. The Deacetylase sirtuin-type domain occupies 28–312 (KPVVEDDIKR…FDFRNSKSVS (285 aa)). NAD(+) is bound by residues 53-73 (GAGI…VGLY) and 134-137 (QNVD). Catalysis depends on histidine 152, which acts as the Proton acceptor. Cysteine 160, cysteine 163, cysteine 211, and cysteine 214 together coordinate Zn(2+). NAD(+)-binding positions include 251 to 253 (GSS), 277 to 279 (NIG), and cysteine 295.

This sequence belongs to the sirtuin family. Class II subfamily. The cofactor is Zn(2+).

It is found in the mitochondrion matrix. It catalyses the reaction N(6)-acetyl-L-lysyl-[protein] + NAD(+) + H2O = 2''-O-acetyl-ADP-D-ribose + nicotinamide + L-lysyl-[protein]. NAD-dependent protein deacylase. Catalyzes the NAD-dependent hydrolysis of acyl groups from lysine residues. This is NAD-dependent protein deacylase Sirt4 (Sirt4) from Drosophila melanogaster (Fruit fly).